Here is a 229-residue protein sequence, read N- to C-terminus: UPF0173 metal-dependent hydrolase SERP1270 (229 aa).

This sequence belongs to the UPF0173 family.

The polypeptide is UPF0173 metal-dependent hydrolase SERP1270 (Staphylococcus epidermidis (strain ATCC 35984 / DSM 28319 / BCRC 17069 / CCUG 31568 / BM 3577 / RP62A)).